Consider the following 35-residue polypeptide: Small toxic polypeptide LdrB (35 aa).

The chain crosses the membrane as a helical span at residues 10–30 (FWHDLAAPILAGIITAAIVGW).

The protein belongs to the Ldr toxic peptide family.

It localises to the cell inner membrane. Functionally, toxic component of a type I toxin-antitoxin (TA) system. Overexpression causes rapid cell killing, probably by disrupting the cell inner membrane and disruption of ATP synthesis. The protein is Small toxic polypeptide LdrB (ldrB) of Escherichia coli (strain K12).